The sequence spans 398 residues: Lysophospholipid transporter LplT (398 aa).

12 helical membrane-spanning segments follow: residues 19-39, 53-73, 96-116, 139-159, 164-184, 195-213, 227-247, 257-277, 281-301, 304-324, 352-372, and 373-393; these read VIVAQFLSAFGDNALLFATLA, VLQMVFVGAYILFAPFVGQIA, ICLGVNPFVGYTLVGIGAAAY, LMEASTIAAILLGSVAGGVLA, IAALVACTLAYAGAVVANLFI, SWQLAAMIRSFFCACVVLW, LFWGAGVTLRFLVVLWVPVAL, YLNAMVAVGIVVGAGAAAKLV, TVSRCMPAGILIGVVVAMFSL, ALLPAYALLLLIGILGGFFVV, NSTMLLMLGLYSLAVMVGVPA, and VATGIGFGVLFALAIAALWIW.

It belongs to the major facilitator superfamily. LplT (TC 2.A.1.42) family.

The protein localises to the cell inner membrane. In terms of biological role, catalyzes the facilitated diffusion of 2-acyl-glycero-3-phosphoethanolamine (2-acyl-GPE) into the cell. This chain is Lysophospholipid transporter LplT, found in Salmonella arizonae (strain ATCC BAA-731 / CDC346-86 / RSK2980).